The chain runs to 303 residues: Elongation factor Ts (303 aa).

The tract at residues 80 to 83 (TDFV) is involved in Mg(2+) ion dislocation from EF-Tu.

This sequence belongs to the EF-Ts family.

It localises to the cytoplasm. Functionally, associates with the EF-Tu.GDP complex and induces the exchange of GDP to GTP. It remains bound to the aminoacyl-tRNA.EF-Tu.GTP complex up to the GTP hydrolysis stage on the ribosome. The polypeptide is Elongation factor Ts (Clostridium perfringens (strain ATCC 13124 / DSM 756 / JCM 1290 / NCIMB 6125 / NCTC 8237 / Type A)).